The chain runs to 403 residues: Chalcone synthase 2 (403 aa).

59-66 (RFQRMCES) is a binding site for CoA. Cys-168 acts as the Acyl-thioester intermediate in catalysis. Substrate is bound at residue 220-221 (GD). Position 313 (Ala-313) interacts with CoA.

This sequence belongs to the thiolase-like superfamily. Chalcone/stilbene synthases family. Homodimer.

The catalysed reaction is (E)-4-coumaroyl-CoA + 3 malonyl-CoA + 3 H(+) = 2',4,4',6'-tetrahydroxychalcone + 3 CO2 + 4 CoA. It participates in secondary metabolite biosynthesis; flavonoid biosynthesis. Its function is as follows. The primary product of this enzyme is 4,2',4',6'-tetrahydroxychalcone (also termed naringenin-chalcone or chalcone) which can under specific conditions spontaneously isomerize into naringenin. The chain is Chalcone synthase 2 (CHS2) from Oryza sativa subsp. japonica (Rice).